The sequence spans 160 residues: MGVTKKPDLNDPVLRAKLAKGMGHNYYGEPAWPNDLLYIFPVVILGTIACNVGLAILEPSMIGEPADPFATPLEILPEWYFFPVFQILRTVPNKLLGVLLMASVPLGLFTVPFLENVNKFQNPFRRPVATTVFLIGTAVALWLGIGATLPIDKSLTLGLF.

3 helical membrane-spanning segments follow: residues 36–56 (LLYI…GLAI), 95–115 (LLGV…PFLE), and 131–151 (TVFL…TLPI).

This sequence belongs to the cytochrome b family. PetD subfamily. The 4 large subunits of the cytochrome b6-f complex are cytochrome b6, subunit IV (17 kDa polypeptide, petD), cytochrome f and the Rieske protein, while the 4 small subunits are petG, petL, petM and petN. The complex functions as a dimer.

It localises to the plastid. The protein localises to the chloroplast thylakoid membrane. Component of the cytochrome b6-f complex, which mediates electron transfer between photosystem II (PSII) and photosystem I (PSI), cyclic electron flow around PSI, and state transitions. In Acorus calamus (Sweet flag), this protein is Cytochrome b6-f complex subunit 4.